We begin with the raw amino-acid sequence, 1093 residues long: ATP-dependent helicase/deoxyribonuclease subunit B (1093 aa).

Belongs to the helicase family. AddB/RexB type 2 subfamily. In terms of assembly, heterodimer of AddA and RexB. Mg(2+) is required as a cofactor.

Its function is as follows. The heterodimer acts as both an ATP-dependent DNA helicase and an ATP-dependent, dual-direction single-stranded exonuclease. Recognizes the chi site generating a DNA molecule suitable for the initiation of homologous recombination. This subunit has 5' -&gt; 3' nuclease activity but not helicase activity. The sequence is that of ATP-dependent helicase/deoxyribonuclease subunit B from Streptococcus sanguinis (strain SK36).